Reading from the N-terminus, the 189-residue chain is Elongation factor P (189 aa).

The protein belongs to the elongation factor P family.

It localises to the cytoplasm. It functions in the pathway protein biosynthesis; polypeptide chain elongation. Its function is as follows. Involved in peptide bond synthesis. Stimulates efficient translation and peptide-bond synthesis on native or reconstituted 70S ribosomes in vitro. Probably functions indirectly by altering the affinity of the ribosome for aminoacyl-tRNA, thus increasing their reactivity as acceptors for peptidyl transferase. The protein is Elongation factor P of Pseudomonas syringae pv. syringae (strain B728a).